The sequence spans 703 residues: Fatty acid oxidation complex subunit alpha (703 aa).

The interval 1 to 190 (MSEQKAFSLN…KLGVVDACVP (190 aa)) is enoyl-CoA hydratase. The segment at 308-703 (AAVKKVGVLG…TRAGEGRTFY (396 aa)) is 3-hydroxyacyl-CoA dehydrogenase.

This sequence in the N-terminal section; belongs to the enoyl-CoA hydratase/isomerase family. The protein in the central section; belongs to the 3-hydroxyacyl-CoA dehydrogenase family. In terms of assembly, heterotetramer of two alpha chains (FadJ) and two beta chains (FadI).

Its subcellular location is the cytoplasm. The enzyme catalyses a (3S)-3-hydroxyacyl-CoA = a (2E)-enoyl-CoA + H2O. It carries out the reaction a 4-saturated-(3S)-3-hydroxyacyl-CoA = a (3E)-enoyl-CoA + H2O. It catalyses the reaction a (3S)-3-hydroxyacyl-CoA + NAD(+) = a 3-oxoacyl-CoA + NADH + H(+). The catalysed reaction is (3S)-3-hydroxybutanoyl-CoA = (3R)-3-hydroxybutanoyl-CoA. It functions in the pathway lipid metabolism; fatty acid beta-oxidation. Functionally, catalyzes the formation of a hydroxyacyl-CoA by addition of water on enoyl-CoA. Also exhibits 3-hydroxyacyl-CoA epimerase and 3-hydroxyacyl-CoA dehydrogenase activities. The polypeptide is Fatty acid oxidation complex subunit alpha (Vibrio parahaemolyticus serotype O3:K6 (strain RIMD 2210633)).